We begin with the raw amino-acid sequence, 748 residues long: Disintegrin and metalloproteinase domain-containing protein 10 (748 aa).

Residues 1 to 19 form the signal peptide; that stretch reads MVLLRVLILLLSWAAGMGG. Residues 20-213 constitute a propeptide that is removed on maturation; sequence QYGNPLNKYI…NGPELLRKKR (194 aa). At 20–672 the chain is on the extracellular side; the sequence is QYGNPLNKYI…SPELYENIAE (653 aa). The short motif at 171–178 is the Cysteine switch element; the sequence is GGCADHSV. A Zn(2+)-binding site is contributed by Cys-173. The region spanning 220 to 456 is the Peptidase M12B domain; that stretch reads NTCQLYIQTD…KRNNCFVESG (237 aa). 17 disulfide bridges follow: Cys-222–Cys-313, Cys-344–Cys-451, Cys-399–Cys-435, Cys-460–Cys-495, Cys-471–Cys-484, Cys-473–Cys-479, Cys-483–Cys-515, Cys-503–Cys-511, Cys-510–Cys-536, Cys-524–Cys-543, Cys-530–Cys-562, Cys-555–Cys-567, Cys-572–Cys-598, Cys-580–Cys-607, Cys-582–Cys-597, Cys-594–Cys-639, and Cys-632–Cys-645. N-linked (GlcNAc...) asparagine glycosylation is found at Asn-267 and Asn-278. His-383 contributes to the Zn(2+) binding site. The active site involves Glu-384. Zn(2+) is bound by residues His-387 and His-393. The N-linked (GlcNAc...) asparagine glycan is linked to Asn-439. The 95-residue stretch at 457 to 551 folds into the Disintegrin domain; the sequence is QPICGNGMVE…LCPASDPKPN (95 aa). Asn-551 carries N-linked (GlcNAc...) asparagine glycosylation. A helical transmembrane segment spans residues 673 to 693; the sequence is WIVAHWWAVLLMGIALIMLMA. Residues 694–748 lie on the Cytoplasmic side of the membrane; the sequence is GFIKICSVHTPSSNPKLPPPKPLPGTLKRRRPPQPIQQPQRQRPRESYQMGHMRR. The disordered stretch occupies residues 704–748; it reads PSSNPKLPPPKPLPGTLKRRRPPQPIQQPQRQRPRESYQMGHMRR. The SH3-binding signature appears at 708-715; it reads PKLPPPKP. Thr-719 is subject to Phosphothreonine; by FAM20C. An SH3-binding motif is present at residues 722–728; it reads RRRPPQP. Residues 734–748 form an interaction with AP2A1, AP2A2 and AP2M1 region; the sequence is RQRPRESYQMGHMRR.

In terms of assembly, forms a ternary EFNA5-EPHA3-ADAM10 complex mediating EFNA5 extracellular domain shedding by ADAM10 which regulates the EFNA5-EPHA3 complex internalization and function, the cleavage occurs in trans, with ADAM10 and its substrate being on the membranes of opposing cells. Interacts with the clathrin adapter AP2 complex subunits AP2A1, AP2A2, AP2B1, and AP2M1; this interaction facilitates ADAM10 endocytosis from the plasma membrane during long-term potentiation in hippocampal neurons. Forms a ternary complex composed of ADAM10, EPHA4 and CADH1; within the complex, ADAM10 cleaves CADH1 which disrupts adherens junctions. Interacts with EPHA2. Interacts with NGF in a divalent cation-dependent manner. Interacts with TSPAN14; the interaction promotes ADAM10 maturation and cell surface expression. Interacts with TSPAN5, TSPAN10, TSPAN14, TSPAN15, TSPAN17 and TSPAN33; these interactions regulate ADAM10 substrate specificity, endocytosis and turnover. Interacts (via extracellular domain) with TSPAN33 (via extracellular domain) and (via cytoplasmic domain) with AFDN; interaction with TSPAN33 allows the docking of ADAM10 to zonula adherens through a PDZ11-dependent interaction between TSPAN33 and PLEKHA7 while interaction with AFDN locks ADAM10 at zonula adherens. Interacts with DLG1; this interaction recruits ADAM10 to the cell membrane during long-term depression in hippocampal neurons. Interacts (via extracellular domain) with BACE1 (via extracellular domain). Interacts with FAM171A1. (Microbial infection) Interacts with S.aureus hly; this interaction is necessary for toxin pore formation, disruption of focal adhesions and S.aureus hly-mediated cytotoxicity. Zn(2+) serves as cofactor. In terms of processing, the precursor is cleaved by furin and PCSK7. In terms of tissue distribution, expressed in the brain (at protein level). Expressed in spleen, lymph node, thymus, peripheral blood leukocyte, bone marrow, cartilage, chondrocytes and fetal liver.

The protein localises to the cell membrane. The protein resides in the golgi apparatus membrane. It localises to the cytoplasmic vesicle. It is found in the clathrin-coated vesicle. Its subcellular location is the cell projection. The protein localises to the axon. The protein resides in the dendrite. It localises to the cell junction. It is found in the adherens junction. Its subcellular location is the cytoplasm. The catalysed reaction is Endopeptidase of broad specificity.. With respect to regulation, catalytically inactive when the propeptide is intact and associated with the mature enzyme. The disintegrin and cysteine-rich regions modulate access of substrates to exerts an inhibitory effect on the cleavage of ADAM10 substrates. Its function is as follows. Transmembrane metalloprotease which mediates the ectodomain shedding of a myriad of transmembrane proteins, including adhesion proteins, growth factor precursors and cytokines being essential for development and tissue homeostasis. Associates with six members of the tetraspanin superfamily TspanC8 which regulate its exit from the endoplasmic reticulum and its substrate selectivity. Cleaves the membrane-bound precursor of TNF-alpha at '76-Ala-|-Val-77' to its mature soluble form. Responsible for the proteolytical release of soluble JAM3 from endothelial cells surface. Responsible for the proteolytic release of several other cell-surface proteins, including heparin-binding epidermal growth-like factor, ephrin-A2, CD44, CDH2 and for constitutive and regulated alpha-secretase cleavage of amyloid precursor protein (APP). Contributes to the normal cleavage of the cellular prion protein. Involved in the cleavage of the adhesion molecule L1 at the cell surface and in released membrane vesicles, suggesting a vesicle-based protease activity. Also controls the proteolytic processing of Notch and mediates lateral inhibition during neurogenesis. Required for the development of type 1 transitional B cells into marginal zone B cells, probably by cleaving Notch. Responsible for the FasL ectodomain shedding and for the generation of the remnant ADAM10-processed FasL (FasL APL) transmembrane form. Also cleaves the ectodomain of the integral membrane proteins CORIN and ITM2B. Mediates the proteolytic cleavage of LAG3, leading to release the secreted form of LAG3. Mediates the proteolytic cleavage of IL6R and IL11RA, leading to the release of secreted forms of IL6R and IL11RA. Enhances the cleavage of CHL1 by BACE1. Cleaves NRCAM. Cleaves TREM2, resulting in shedding of the TREM2 ectodomain. Involved in the development and maturation of glomerular and coronary vasculature. During development of the cochlear organ of Corti, promotes pillar cell separation by forming a ternary complex with CADH1 and EPHA4 and cleaving CADH1 at adherens junctions. May regulate the EFNA5-EPHA3 signaling. Regulates leukocyte transmigration as a sheddase for the adherens junction protein VE-cadherin/CDH5 in endothelial cells. (Microbial infection) Promotes the cytotoxic activity of S.aureus hly by binding to the toxin at zonula adherens and promoting formation of toxin pores. This is Disintegrin and metalloproteinase domain-containing protein 10 from Homo sapiens (Human).